The following is an 890-amino-acid chain: Putative RNA-binding protein 15B (890 aa).

A disordered region spans residues 1–133; it reads MKRQSERDSS…AEPACPGSSA (133 aa). Low complexity predominate over residues 10 to 20; sequence SPSGRGSSSSA. Basic and acidic residues-rich tracts occupy residues 22 to 34 and 66 to 78; these read RPRE…EAGG and GHRD…DANH. Residues 86–99 show a composition bias toward gly residues; sequence SGSGAGGGGRGGKA. Phosphoserine occurs at positions 109 and 113. Residues 113-124 show a composition bias toward pro residues; it reads SPLPPPPPPPGA. One can recognise an RRM 1 domain in the interval 139–219; it reads KTLLISSLSP…RPLKVEPVYL (81 aa). Lysine 213 is covalently cross-linked (Glycyl lysine isopeptide (Lys-Gly) (interchain with G-Cter in SUMO2)). A disordered region spans residues 219-253; that stretch reads LRGGGGSSRRSSSSSAAASTPPPGPPAPADPLGYL. A compositionally biased stretch (low complexity) spans 226 to 237; the sequence is SRRSSSSSAAAS. The segment covering 238-247 has biased composition (pro residues); the sequence is TPPPGPPAPA. Residues serine 265 and serine 267 each carry the phosphoserine modification. RRM domains lie at 337–414 and 418–492; these read RNLF…YGKA and TRLW…FAKA. Phosphothreonine is present on threonine 532. The tract at residues 547-705 is disordered; the sequence is EGDWTSPSKS…KPLEEPKHET (159 aa). Serine 552, serine 556, and serine 562 each carry phosphoserine. Composition is skewed to basic and acidic residues over residues 573 to 616 and 626 to 646; these read RSGE…ERSR and RGSD…EGTK. Residues 593-597 carry the Nuclear localization signal motif; the sequence is RRKRR. The segment covering 647–657 has biased composition (low complexity); that stretch reads ESSSNSLSNSR. The span at 671–703 shows a compositional bias: basic and acidic residues; that stretch reads EAADSSHGKKARDSERNHRTTEAEPKPLEEPKH. A Glycyl lysine isopeptide (Lys-Gly) (interchain with G-Cter in SUMO2) cross-link involves residue lysine 702. The SPOC domain occupies 711–889; it reads LSEYAQTLQL…HMVIVIVRDT (179 aa). Residues 722–890 are interaction with Epstein-Barr virus BMLF1; sequence WNGLLVLKNS…MVIVIVRDTA (169 aa).

The protein belongs to the RRM Spen family. Component of the WMM complex, a N6-methyltransferase complex composed of a catalytic subcomplex, named MAC, and of an associated subcomplex, named MACOM. The MAC subcomplex is composed of METTL3 and METTL14. The MACOM subcomplex is composed of WTAP, ZC3H13, CBLL1/HAKAI, VIRMA, and, in some cases of RBM15 (RBM15 or RBM15B). May interact with NCOR2. Interacts with NXF1, the interaction is required to promote mRNA export. As to quaternary structure, (Microbial infection) Interacts (via the SPOC domain) with Epstein-Barr virus BMLF1 (via the N-terminus); the interaction is direct. Ubiquitously expressed.

It localises to the nucleus. Its subcellular location is the nucleoplasm. It is found in the nucleus speckle. The protein localises to the nucleus envelope. Functionally, RNA-binding protein that acts as a key regulator of N6-methyladenosine (m6A) methylation of RNAs, thereby regulating different processes, such as alternative splicing of mRNAs and X chromosome inactivation mediated by Xist RNA. Associated component of the WMM complex, a complex that mediates N6-methyladenosine (m6A) methylation of RNAs, a modification that plays a role in the efficiency of mRNA splicing and RNA processing. Plays a key role in m6A methylation, possibly by binding target RNAs and recruiting the WMM complex. Involved in random X inactivation mediated by Xist RNA: acts by binding Xist RNA and recruiting the WMM complex, which mediates m6A methylation, leading to target YTHDC1 reader on Xist RNA and promoting transcription repression activity of Xist. Functions in the regulation of alternative or illicit splicing, possibly by regulating m6A methylation. Inhibits pre-mRNA splicing. Also functions as a mRNA export factor by acting as a cofactor for the nuclear export receptor NXF1. The sequence is that of Putative RNA-binding protein 15B from Homo sapiens (Human).